We begin with the raw amino-acid sequence, 166 residues long: MANNEQKRDEGYIEKLVQVNRVAKTVKGGRIFAFTALTVVGDGKGRVGFGRGKAREVPAAIQKAMEAARRNMIQVDLNGTTLQYPTKSAHGASKVYMQPASEGTGIIAGGAMRAVLEVAGVQNVLAKCYGSTNPVNVVYATFKGLKNMQAPEAVAAKRGKSVEEIL.

The 64-residue stretch at 12–75 (YIEKLVQVNR…EAARRNMIQV (64 aa)) folds into the S5 DRBM domain.

Belongs to the universal ribosomal protein uS5 family. As to quaternary structure, part of the 30S ribosomal subunit. Contacts proteins S4 and S8.

Its function is as follows. With S4 and S12 plays an important role in translational accuracy. Functionally, located at the back of the 30S subunit body where it stabilizes the conformation of the head with respect to the body. The sequence is that of Small ribosomal subunit protein uS5 from Pseudomonas aeruginosa (strain LESB58).